Reading from the N-terminus, the 177-residue chain is Ribonuclease H (177 aa).

Positions 1–142 (MSKQVEIFTD…ADELAREGMA (142 aa)) constitute an RNase H type-1 domain. 4 residues coordinate Mg(2+): Asp-10, Glu-48, Asp-70, and Asp-134. A compositionally biased stretch (basic and acidic residues) spans 126 to 138 (GHTENERADELAR). A disordered region spans residues 126–177 (GHTENERADELAREGMAPFKKGSFKPAASAPKPDAQLKQPVATKARRSTQSY).

Belongs to the RNase H family. As to quaternary structure, monomer. It depends on Mg(2+) as a cofactor.

The protein localises to the cytoplasm. The enzyme catalyses Endonucleolytic cleavage to 5'-phosphomonoester.. Endonuclease that specifically degrades the RNA of RNA-DNA hybrids. The polypeptide is Ribonuclease H (Mesorhizobium japonicum (strain LMG 29417 / CECT 9101 / MAFF 303099) (Mesorhizobium loti (strain MAFF 303099))).